We begin with the raw amino-acid sequence, 469 residues long: Glutamate-1-semialdehyde 2,1-aminomutase, chloroplastic (469 aa).

A chloroplast-targeting transit peptide spans 1 to 34 (MAGAAAAVASGISIRPVAAPKISRAPRSRSVVRA). Residue Lys309 is modified to N6-(pyridoxal phosphate)lysine.

This sequence belongs to the class-III pyridoxal-phosphate-dependent aminotransferase family. HemL subfamily. As to quaternary structure, homodimer. The cofactor is pyridoxal 5'-phosphate.

Its subcellular location is the plastid. It is found in the chloroplast. The enzyme catalyses (S)-4-amino-5-oxopentanoate = 5-aminolevulinate. Its pathway is porphyrin-containing compound metabolism; protoporphyrin-IX biosynthesis; 5-aminolevulinate from L-glutamyl-tRNA(Glu): step 2/2. It functions in the pathway porphyrin-containing compound metabolism; chlorophyll biosynthesis. This is Glutamate-1-semialdehyde 2,1-aminomutase, chloroplastic (GSA) from Hordeum vulgare (Barley).